A 148-amino-acid chain; its full sequence is Truncated transcription factor CAULIFLOWER C (148 aa).

An MADS-box domain is found at 1-61 (MGRGRVEMKR…GKLFEYSSES (61 aa)). Positions 90-148 (QTNWSMEYSRLKAKIELWERNQRHYLGEDLESISIKELQNLEQQLDTSLKHIPSRKVCK) constitute a K-box; partial domain.

In terms of assembly, homodimer capable of binding to CArG-box sequences.

The protein localises to the nucleus. In terms of biological role, probable transcription factor that promotes early floral meristem identity in synergy with APETALA1, FRUITFULL and LEAFY. Is required subsequently for the transition of an inflorescence meristem into a floral meristem. Seems to be partially redundant to the function of APETALA1. The protein is Truncated transcription factor CAULIFLOWER C (CAL-C) of Brassica oleracea var. botrytis (Cauliflower).